A 160-amino-acid chain; its full sequence is Ureidoglycolate lyase (160 aa).

This sequence belongs to the ureidoglycolate lyase family. As to quaternary structure, homodimer. Ni(2+) serves as cofactor.

It catalyses the reaction (S)-ureidoglycolate = urea + glyoxylate. It participates in nitrogen metabolism; (S)-allantoin degradation. In terms of biological role, catalyzes the catabolism of the allantoin degradation intermediate (S)-ureidoglycolate, generating urea and glyoxylate. Involved in the utilization of allantoin as nitrogen source. The polypeptide is Ureidoglycolate lyase (Salmonella enteritidis).